The primary structure comprises 740 residues: Ribulose bisphosphate carboxylase, chloroplastic (740 aa).

A chloroplast-targeting transit peptide spans 1–55 (MPSSSFTTGLALGAGALVGANAFVAPTAKTTNLRAPTQEASLQVAASQQTEQPAP). Residues 56 to 76 (STSALPWAFGAGACLALAAGG) form a helical membrane-spanning segment. Asn213 contributes to the substrate binding site. Residue Lys268 is the Proton acceptor of the active site. Lys270 serves as a coordination point for substrate. The Mg(2+) site is built by Lys293, Asp295, and Glu296. At Lys293 the chain carries N6-carboxylysine. His389 (proton acceptor) is an active-site residue. 3 residues coordinate substrate: Arg390, His423, and Ser470.

It belongs to the RuBisCO large chain family. Type II subfamily. As to quaternary structure, homodimer. Mg(2+) serves as cofactor.

Its subcellular location is the plastid. The protein resides in the chloroplast membrane. The enzyme catalyses 2 (2R)-3-phosphoglycerate + 2 H(+) = D-ribulose 1,5-bisphosphate + CO2 + H2O. It catalyses the reaction D-ribulose 1,5-bisphosphate + O2 = 2-phosphoglycolate + (2R)-3-phosphoglycerate + 2 H(+). Its function is as follows. RuBisCO catalyzes two reactions: the carboxylation of D-ribulose 1,5-bisphosphate, the primary event in carbon dioxide fixation, as well as the oxidative fragmentation of the pentose substrate. Both reactions occur simultaneously and in competition at the same active site. In Heterocapsa triquetra (Dinoflagellate), this protein is Ribulose bisphosphate carboxylase, chloroplastic (rbcL).